The sequence spans 65 residues: Large ribosomal subunit protein bL35 (65 aa).

It belongs to the bacterial ribosomal protein bL35 family.

In Prochlorococcus marinus (strain MIT 9215), this protein is Large ribosomal subunit protein bL35.